The primary structure comprises 241 residues: Venom nerve growth factor 2 (241 aa).

Residues 1–18 form the signal peptide; that stretch reads MSMLCYTLITAFLIGIWA. A propeptide spanning residues 19 to 125 is cleaved from the precursor; the sequence is APKSEDNVPL…SLNRNIRAKR (107 aa). Residues 47-67 are disordered; sequence GLKTSRNTDQRHPAPQKAEDQ. Disulfide bonds link Cys139/Cys203, Cys181/Cys231, and Cys191/Cys233.

It belongs to the NGF-beta family. As to quaternary structure, homodimer; non-covalently linked. Expressed by the venom gland.

The protein resides in the secreted. Its function is as follows. Nerve growth factor is important for the development and maintenance of the sympathetic and sensory nervous systems. It stimulates division and differentiation of sympathetic and embryonic sensory neurons as well as basal forebrain cholinergic neurons in the brain. Its relevance in the snake venom is not clear. However, it has been shown to inhibit metalloproteinase-dependent proteolysis of platelet glycoprotein Ib alpha, suggesting a metalloproteinase inhibition to prevent metalloprotease autodigestion and/or protection against prey proteases. Binds a lipid between the two protein chains in the homodimer. The lipid-bound form promotes histamine relase from mouse mast cells, contrary to the lipid-free form. The protein is Venom nerve growth factor 2 of Naja sputatrix (Malayan spitting cobra).